The following is a 243-amino-acid chain: NAD-dependent protein deacetylase (243 aa).

The Deacetylase sirtuin-type domain maps to 1–243; sequence MKHDLETLKH…VSVVKSLMTE (243 aa). The NAD(+) site is built by A24, F35, R36, Q105, I107, D108, and H123. F35 provides a ligand contact to nicotinamide. I107 and D108 together coordinate nicotinamide. Residue H123 is the Proton acceptor of the active site. Zn(2+) contacts are provided by C131, C134, C151, and C154. S192, S193, N215, and D232 together coordinate NAD(+).

This sequence belongs to the sirtuin family. Class U subfamily. The cofactor is Zn(2+).

It localises to the cytoplasm. The catalysed reaction is N(6)-acetyl-L-lysyl-[protein] + NAD(+) + H2O = 2''-O-acetyl-ADP-D-ribose + nicotinamide + L-lysyl-[protein]. In terms of biological role, NAD-dependent protein deacetylase which modulates the activities of several enzymes which are inactive in their acetylated form. The polypeptide is NAD-dependent protein deacetylase (Staphylococcus aureus (strain MRSA252)).